We begin with the raw amino-acid sequence, 142 residues long: Nucleoside diphosphate kinase (142 aa).

Residues Lys9, Phe57, Arg85, Thr91, Arg102, and Asn112 each contribute to the ATP site. Residues 87 to 106 form a disordered region; the sequence is AMGATDPAKSEKGTVRGDLG. Catalysis depends on His115, which acts as the Pros-phosphohistidine intermediate.

It belongs to the NDK family. In terms of assembly, homotetramer. It depends on Mg(2+) as a cofactor.

Its subcellular location is the cytoplasm. The enzyme catalyses a 2'-deoxyribonucleoside 5'-diphosphate + ATP = a 2'-deoxyribonucleoside 5'-triphosphate + ADP. It catalyses the reaction a ribonucleoside 5'-diphosphate + ATP = a ribonucleoside 5'-triphosphate + ADP. In terms of biological role, major role in the synthesis of nucleoside triphosphates other than ATP. The ATP gamma phosphate is transferred to the NDP beta phosphate via a ping-pong mechanism, using a phosphorylated active-site intermediate. The protein is Nucleoside diphosphate kinase of Dehalococcoides mccartyi (strain ATCC BAA-2266 / KCTC 15142 / 195) (Dehalococcoides ethenogenes (strain 195)).